A 114-amino-acid polypeptide reads, in one-letter code: MGTRLFFYVALCLLWAGHRDAGITQSPRYKITETGRQVTLMCHQTWSHSYMFWYRQDLGHGLRLIYYSAAADITDKGEVPDGYVVSRSKTENFPLTLESATRSQTSVYFCASSE.

Residues 1 to 21 form the signal peptide; the sequence is MGTRLFFYVALCLLWAGHRDA. The Ig-like domain maps to 22–114; sequence GITQSPRYKI…TSVYFCASSE (93 aa). Cysteine 42 and cysteine 110 are joined by a disulfide.

As to quaternary structure, alpha-beta TR is a heterodimer composed of an alpha and beta chain; disulfide-linked. The alpha-beta TR is associated with the transmembrane signaling CD3 coreceptor proteins to form the TR-CD3 (TcR or TCR). The assembly of alpha-beta TR heterodimers with CD3 occurs in the endoplasmic reticulum where a single alpha-beta TR heterodimer associates with one CD3D-CD3E heterodimer, one CD3G-CD3E heterodimer and one CD247 homodimer forming a stable octameric structure. CD3D-CD3E and CD3G-CD3E heterodimers preferentially associate with TR alpha and TR beta chains, respectively. The association of the CD247 homodimer is the last step of TcR assembly in the endoplasmic reticulum and is required for transport to the cell surface.

It is found in the cell membrane. V region of the variable domain of T cell receptor (TR) beta chain that participates in the antigen recognition. Alpha-beta T cell receptors are antigen specific receptors which are essential to the immune response and are present on the cell surface of T lymphocytes. Recognize peptide-major histocompatibility (MH) (pMH) complexes that are displayed by antigen presenting cells (APC), a prerequisite for efficient T cell adaptive immunity against pathogens. Binding of alpha-beta TR to pMH complex initiates TR-CD3 clustering on the cell surface and intracellular activation of LCK that phosphorylates the ITAM motifs of CD3G, CD3D, CD3E and CD247 enabling the recruitment of ZAP70. In turn ZAP70 phosphorylates LAT, which recruits numerous signaling molecules to form the LAT signalosome. The LAT signalosome propagates signal branching to three major signaling pathways, the calcium, the mitogen-activated protein kinase (MAPK) kinase and the nuclear factor NF-kappa-B (NF-kB) pathways, leading to the mobilization of transcription factors that are critical for gene expression and essential for T cell growth and differentiation. The T cell repertoire is generated in the thymus, by V-(D)-J rearrangement. This repertoire is then shaped by intrathymic selection events to generate a peripheral T cell pool of self-MH restricted, non-autoaggressive T cells. Post-thymic interaction of alpha-beta TR with the pMH complexes shapes TR structural and functional avidity. This Homo sapiens (Human) protein is T cell receptor beta variable 10-2.